The following is a 185-amino-acid chain: Ribosome-recycling factor (185 aa).

The protein belongs to the RRF family.

Its subcellular location is the cytoplasm. Its function is as follows. Responsible for the release of ribosomes from messenger RNA at the termination of protein biosynthesis. May increase the efficiency of translation by recycling ribosomes from one round of translation to another. The sequence is that of Ribosome-recycling factor from Salmonella paratyphi A (strain ATCC 9150 / SARB42).